The sequence spans 140 residues: Large ribosomal subunit protein uL16 (140 aa).

It belongs to the universal ribosomal protein uL16 family. As to quaternary structure, part of the 50S ribosomal subunit.

In terms of biological role, binds 23S rRNA and is also seen to make contacts with the A and possibly P site tRNAs. This chain is Large ribosomal subunit protein uL16, found in Amoebophilus asiaticus (strain 5a2).